A 692-amino-acid chain; its full sequence is Elongation factor G (692 aa).

The tr-type G domain occupies 8–283 (NRIRNIGIAA…AVIDYLPAPT (276 aa)). Residues 17 to 24 (AHIDAGKT), 81 to 85 (DTPGH), and 135 to 138 (NKMD) each bind GTP.

This sequence belongs to the TRAFAC class translation factor GTPase superfamily. Classic translation factor GTPase family. EF-G/EF-2 subfamily.

The protein resides in the cytoplasm. Catalyzes the GTP-dependent ribosomal translocation step during translation elongation. During this step, the ribosome changes from the pre-translocational (PRE) to the post-translocational (POST) state as the newly formed A-site-bound peptidyl-tRNA and P-site-bound deacylated tRNA move to the P and E sites, respectively. Catalyzes the coordinated movement of the two tRNA molecules, the mRNA and conformational changes in the ribosome. In Helicobacter acinonychis (strain Sheeba), this protein is Elongation factor G.